The following is a 180-amino-acid chain: MSRVGKLPVAIPNGVTVTVTPDNVVTVKGPKGELVKAMSNKINIAVEDNSVVVTRDNDHKDVRALHGLTRALINNMVTGVNEGYVKTLELVGVGYRAQLQGKKLVLSLGFSHPVEMEAVSGVEFEVEGGTKVKVKGIDKELVGAVAADIRKWRKPEPYKGKGIKYENEVIRRKEGKTGKK.

Belongs to the universal ribosomal protein uL6 family. As to quaternary structure, part of the 50S ribosomal subunit.

In terms of biological role, this protein binds to the 23S rRNA, and is important in its secondary structure. It is located near the subunit interface in the base of the L7/L12 stalk, and near the tRNA binding site of the peptidyltransferase center. The sequence is that of Large ribosomal subunit protein uL6 from Clostridium botulinum (strain Okra / Type B1).